A 379-amino-acid polypeptide reads, in one-letter code: Queuine tRNA-ribosyltransferase (379 aa).

D94 serves as the catalytic Proton acceptor. Substrate is bound by residues 94–98 (DSGGF), D148, Q191, and G218. An RNA binding region spans residues 249–255 (GVGSPDS). D268 acts as the Nucleophile in catalysis. Positions 273-277 (TRIAR) are RNA binding; important for wobble base 34 recognition. Residues C306, C308, C311, and H337 each coordinate Zn(2+).

Belongs to the queuine tRNA-ribosyltransferase family. Homodimer. Within each dimer, one monomer is responsible for RNA recognition and catalysis, while the other monomer binds to the replacement base PreQ1. The cofactor is Zn(2+).

It carries out the reaction 7-aminomethyl-7-carbaguanine + guanosine(34) in tRNA = 7-aminomethyl-7-carbaguanosine(34) in tRNA + guanine. It functions in the pathway tRNA modification; tRNA-queuosine biosynthesis. Its function is as follows. Catalyzes the base-exchange of a guanine (G) residue with the queuine precursor 7-aminomethyl-7-deazaguanine (PreQ1) at position 34 (anticodon wobble position) in tRNAs with GU(N) anticodons (tRNA-Asp, -Asn, -His and -Tyr). Catalysis occurs through a double-displacement mechanism. The nucleophile active site attacks the C1' of nucleotide 34 to detach the guanine base from the RNA, forming a covalent enzyme-RNA intermediate. The proton acceptor active site deprotonates the incoming PreQ1, allowing a nucleophilic attack on the C1' of the ribose to form the product. After dissociation, two additional enzymatic reactions on the tRNA convert PreQ1 to queuine (Q), resulting in the hypermodified nucleoside queuosine (7-(((4,5-cis-dihydroxy-2-cyclopenten-1-yl)amino)methyl)-7-deazaguanosine). This Listeria welshimeri serovar 6b (strain ATCC 35897 / DSM 20650 / CCUG 15529 / CIP 8149 / NCTC 11857 / SLCC 5334 / V8) protein is Queuine tRNA-ribosyltransferase.